Consider the following 329-residue polypeptide: G-protein coupled bile acid receptor 1 (329 aa).

At 1-18 the chain is on the extracellular side; it reads MMSHNTTELSAIPRGVQE. Residue asparagine 5 is glycosylated (N-linked (GlcNAc...) asparagine). A helical membrane pass occupies residues 19–39; sequence LSLVLASLIVIANLLLALGIV. The Cytoplasmic portion of the chain corresponds to 40-49; that stretch reads LDRHLRSPPA. The chain crosses the membrane as a helical span at residues 50–70; the sequence is GCFFLSLLLAGLLTGLALPTL. Residues 71–84 lie on the Extracellular side of the membrane; it reads PGLWNRSHQGYWSC. Asparagine 75 is a glycosylation site (N-linked (GlcNAc...) asparagine). A disulfide bridge links cysteine 84 with cysteine 154. A helical membrane pass occupies residues 85-105; it reads LLLHLAPNFCFLSLLANLLLV. The Cytoplasmic portion of the chain corresponds to 106 to 124; sequence HGERYMAVLQPLRPHGSVR. The chain crosses the membrane as a helical span at residues 125–145; sequence LALFLTWISSLLFASLPALGW. Residues 146–157 are Extracellular-facing; sequence NHWSPGANCSSQ. N-linked (GlcNAc...) asparagine glycosylation occurs at asparagine 153. The helical transmembrane segment at 158-178 threads the bilayer; it reads AIFPAPYLYLEVYGLLLPAVG. Residues 179–229 are Cytoplasmic-facing; that stretch reads ATALLSVRVLATAHHQLREIRRLERAVCRDAPSTLARALTWRQARAQAGAT. The helical transmembrane segment at 230–250 threads the bilayer; it reads LLFLLCWGPYVATLLLSVLAY. The Extracellular segment spans residues 251–260; that stretch reads ERRPPLGPVT. The chain crosses the membrane as a helical span at residues 261–281; the sequence is LLSLISLGSASAAVVPVAMGL. Over 282-329 the chain is Cytoplasmic; the sequence is GDQRYTAPWRTAAQRWLQVLRGRPKRANPGPSTAYHSSSQCSTDLDLN. Residues 306–329 form a disordered region; it reads KRANPGPSTAYHSSSQCSTDLDLN. The segment covering 311–329 has biased composition (polar residues); that stretch reads GPSTAYHSSSQCSTDLDLN.

The protein belongs to the G-protein coupled receptor 1 family.

Its subcellular location is the cell membrane. Receptor for bile acid. Bile acid-binding induces its internalization, activation of extracellular signal-regulated kinase and intracellular cAMP production. May be involved in the suppression of macrophage functions by bile acids. Involved in bile acid promoted GLP1R secretion. The polypeptide is G-protein coupled bile acid receptor 1 (Gpbar1) (Rattus norvegicus (Rat)).